The sequence spans 77 residues: Defensin-B6 (77 aa).

Positions 1-20 (MKTLFFLSVFIFLLLHLSPG) are cleaved as a signal peptide. 3 disulfides stabilise this stretch: C43–C70, C50–C64, and C54–C71.

This sequence belongs to the beta-defensin family. As to expression, lowly expressed in spleen, kidney and lung.

Its subcellular location is the secreted. In terms of biological role, has antimicrobial activity. This Ornithorhynchus anatinus (Duckbill platypus) protein is Defensin-B6.